The following is a 125-amino-acid chain: Holo-[acyl-carrier-protein] synthase (125 aa).

The Mg(2+) site is built by Asp-8 and Glu-57.

Belongs to the P-Pant transferase superfamily. AcpS family. Mg(2+) serves as cofactor.

It is found in the cytoplasm. It catalyses the reaction apo-[ACP] + CoA = holo-[ACP] + adenosine 3',5'-bisphosphate + H(+). In terms of biological role, transfers the 4'-phosphopantetheine moiety from coenzyme A to a Ser of acyl-carrier-protein. The chain is Holo-[acyl-carrier-protein] synthase from Aromatoleum aromaticum (strain DSM 19018 / LMG 30748 / EbN1) (Azoarcus sp. (strain EbN1)).